A 155-amino-acid polypeptide reads, in one-letter code: Endoribonuclease YbeY (155 aa).

Residues histidine 114, histidine 118, and histidine 124 each contribute to the Zn(2+) site.

Belongs to the endoribonuclease YbeY family. It depends on Zn(2+) as a cofactor.

It is found in the cytoplasm. Single strand-specific metallo-endoribonuclease involved in late-stage 70S ribosome quality control and in maturation of the 3' terminus of the 16S rRNA. The chain is Endoribonuclease YbeY from Escherichia coli O81 (strain ED1a).